A 625-amino-acid chain; its full sequence is MATSPSSCDCLVGVPTGPTLASTCGGSAFMLFMGLLEVFIRSQCDLEDPCGRASTRFRSEPDYEYDFIVIGGGSAGSVVASRLSEVPQWKVLLIEAGGDEPVGAQIPSMFLNFIGSDIDYRYNTEPERMACLSSMEQRCYWPRGKVLGGTSVMNGMMYIRGNREDYDDWAAQGNPGWSYQDVLPFFKKSEDNLELDAVGTEYHAKGGLLPVGKFPYNPPLSYALLKAGEEMGFSVQDLNGQNSTGFMIAQMTARNGIRYSSARAFLRPARMRNNLHILLNTTVTKVLIHPGTKNVVGVEVSDQFGSMRKILVKKEVIVSGGAVNSPQILLLSGVGPKEDLQKVNVRPVHHLPGVGKNLHNHVAYFTNFFIDDADTAPLNWATAMEYLLFRDGLMSGTGISDVTAKMATRWADRPNLPDLQLYFGGYLASCARTGQVGELLSNNSRAIQIFPAVLNPKSRGYITLRSADPLDPPRIFANYLTDERDVKTLVEGIKFAIRLSQTSPLKQYGMRLDKTVVKGCESHAFASDAYWECAVRQNTGPENHQAGSCKMGPSHDPMAVVNHELRVHGVRGLRVMDTSIMPKVTAGNTHAPAVMIAEKGAYLLKRAWGAKVURVDATWTLHRVI.

A signal peptide spans 1 to 42 (MATSPSSCDCLVGVPTGPTLASTCGGSAFMLFMGLLEVFIRS). Residue 66-95 (DFIVIGGGSAGSVVASRLSEVPQWKVLLIE) coordinates FAD. H544 acts as the Proton acceptor in catalysis. U613 is a non-standard amino acid (selenocysteine).

Belongs to the GMC oxidoreductase family. FAD is required as a cofactor.

It is found in the secreted. It carries out the reaction a quinone + D-glucose = D-glucono-1,5-lactone + a quinol. In Drosophila pseudoobscura pseudoobscura (Fruit fly), this protein is Glucose dehydrogenase [FAD, quinone] (Gld).